The following is a 145-amino-acid chain: Ribosome maturation factor RimP (145 aa).

Belongs to the RimP family.

The protein localises to the cytoplasm. Required for maturation of 30S ribosomal subunits. This is Ribosome maturation factor RimP from Borrelia garinii subsp. bavariensis (strain ATCC BAA-2496 / DSM 23469 / PBi) (Borreliella bavariensis).